We begin with the raw amino-acid sequence, 479 residues long: Aldehyde dehydrogenase family 3 member B2 (479 aa).

Active-site residues include Glu223 and Cys257. A Cysteine methyl ester modification is found at Cys476. Residue Cys476 is the site of S-geranylgeranyl cysteine attachment. The propeptide at 477–479 is removed in mature form; sequence TLL.

Belongs to the aldehyde dehydrogenase family. Post-translationally, geranylgeranylation is important for localization to lipid droplets and enzyme activity. In terms of tissue distribution, expressed in testis, white adipose tissue, lung, small intestine, kidney, spleen and liver.

The protein localises to the lipid droplet. The catalysed reaction is an aldehyde + NAD(+) + H2O = a carboxylate + NADH + 2 H(+). It catalyses the reaction a long-chain fatty aldehyde + NAD(+) + H2O = a long-chain fatty acid + NADH + 2 H(+). The enzyme catalyses a medium-chain fatty aldehyde + NAD(+) + H2O = a medium-chain fatty acid + NADH + 2 H(+). It carries out the reaction hexadecanoate + NADH + 2 H(+) = hexadecanal + NAD(+) + H2O. The catalysed reaction is octanal + NAD(+) + H2O = octanoate + NADH + 2 H(+). Its pathway is alcohol metabolism; ethanol degradation; acetate from ethanol: step 2/2. Oxidizes medium and long chain fatty aldehydes in lipid droplets into non-toxic fatty acids. This chain is Aldehyde dehydrogenase family 3 member B2, found in Mus musculus (Mouse).